The primary structure comprises 302 residues: Methionyl-tRNA formyltransferase (302 aa).

Residue serine 107–proline 110 coordinates (6S)-5,6,7,8-tetrahydrofolate.

The protein belongs to the Fmt family.

It carries out the reaction L-methionyl-tRNA(fMet) + (6R)-10-formyltetrahydrofolate = N-formyl-L-methionyl-tRNA(fMet) + (6S)-5,6,7,8-tetrahydrofolate + H(+). Functionally, attaches a formyl group to the free amino group of methionyl-tRNA(fMet). The formyl group appears to play a dual role in the initiator identity of N-formylmethionyl-tRNA by promoting its recognition by IF2 and preventing the misappropriation of this tRNA by the elongation apparatus. The chain is Methionyl-tRNA formyltransferase from Rickettsia massiliae (strain Mtu5).